Here is a 153-residue protein sequence, read N- to C-terminus: Putative nuclear shuttle protein (153 aa).

The protein belongs to the nanoviridae nuclear shuttle protein family.

The protein localises to the host nucleus. It is found in the host cytoplasm. Putative nuclear shuttle protein. This chain is Putative nuclear shuttle protein (DNA-N), found in Trifolium subterraneum (Subterranean clover).